We begin with the raw amino-acid sequence, 185 residues long: MYTRKTLETEIAVELRRGGALQVETPIPFLTHMVETLLKYAGLGGSVAARELRRLDDGHHVIEDVAIALGRALDALLGERKGIARFGWAAVPMDDSFALAAVDLGGRPYWAVKAKLPDVSIGGYPLRMFPHFVRTLAAEAKATVHIYARGADPHHKVEAAHKALGLALRQAMAPGESPSTKGVLG.

This sequence belongs to the imidazoleglycerol-phosphate dehydratase family.

It is found in the cytoplasm. It carries out the reaction D-erythro-1-(imidazol-4-yl)glycerol 3-phosphate = 3-(imidazol-4-yl)-2-oxopropyl phosphate + H2O. The protein operates within amino-acid biosynthesis; L-histidine biosynthesis; L-histidine from 5-phospho-alpha-D-ribose 1-diphosphate: step 6/9. This Pyrobaculum arsenaticum (strain DSM 13514 / JCM 11321 / PZ6) protein is Imidazoleglycerol-phosphate dehydratase.